The chain runs to 181 residues: Putative poly [ADP-ribose] polymerase-like 100L (181 aa).

A PARP catalytic domain is found at 1–181 (MDNLKEEETN…KIKYIIHITK (181 aa)).

It catalyses the reaction NAD(+) + (ADP-D-ribosyl)n-acceptor = nicotinamide + (ADP-D-ribosyl)n+1-acceptor + H(+).. This chain is Putative poly [ADP-ribose] polymerase-like 100L, found in Invertebrate iridescent virus 6 (IIV-6).